Reading from the N-terminus, the 392-residue chain is Succinate--CoA ligase [ADP-forming] subunit beta (392 aa).

Residues 9-248 (KEILRGFGVT…TSEEDPLEVE (240 aa)) form the ATP-grasp domain. ATP is bound by residues K50, 57 to 59 (GRG), E103, M106, and E111. Residues N203 and D217 each coordinate Mg(2+). Substrate is bound by residues N268 and 325–327 (GIV).

The protein belongs to the succinate/malate CoA ligase beta subunit family. As to quaternary structure, heterotetramer of two alpha and two beta subunits. The cofactor is Mg(2+).

It carries out the reaction succinate + ATP + CoA = succinyl-CoA + ADP + phosphate. The enzyme catalyses GTP + succinate + CoA = succinyl-CoA + GDP + phosphate. It functions in the pathway carbohydrate metabolism; tricarboxylic acid cycle; succinate from succinyl-CoA (ligase route): step 1/1. In terms of biological role, succinyl-CoA synthetase functions in the citric acid cycle (TCA), coupling the hydrolysis of succinyl-CoA to the synthesis of either ATP or GTP and thus represents the only step of substrate-level phosphorylation in the TCA. The beta subunit provides nucleotide specificity of the enzyme and binds the substrate succinate, while the binding sites for coenzyme A and phosphate are found in the alpha subunit. This is Succinate--CoA ligase [ADP-forming] subunit beta from Chloroherpeton thalassium (strain ATCC 35110 / GB-78).